The primary structure comprises 215 residues: UPF0502 protein YceH (215 aa).

An N6-acetyllysine modification is found at lysine 80.

This sequence belongs to the UPF0502 family.

This chain is UPF0502 protein YceH, found in Escherichia coli O45:K1 (strain S88 / ExPEC).